The chain runs to 390 residues: MAPLVKNHGEPQHAKILAIGTANPPNVYYQKDYPDFLFRVTKNEHRTDLREKFDRICEKSRTRKRYLHLTEEILKANPSIYTYGAPSLDVRQDMLNSEVPKLGQQAALKAIKEWGQPISKITHLIFCTASCVDMPGADFQLVKLLGLNPSVTRTMIYEAGCYAGATVLRLAKDFAENNEGARVLVVCAEITTVFFHGLTDTHLDILVGQALFADGASAVIVGANPEPKIERPLFEIVACRQTIIPNSEHGVVANIREMGFTYYLSGEVPKFVGGNVVDFLTKTFEKVDGKNKDWNSLFFSVHPGGPAIVDQVEEQLGLKEGKLRATRHVLSEYGNMGAPSVHFILDDMRKKSIEEGKSTTGEGLEWGVVIGIGPGLTVETAVLRSESIPC.

Cysteine 161 is a catalytic residue.

The protein belongs to the thiolase-like superfamily. Chalcone/stilbene synthases family. Homodimer.

It catalyses the reaction benzoyl-CoA + 3 malonyl-CoA + 3 H(+) = biphenyl-3,5-diol + 4 CO2 + 4 CoA. Type III polyketide synthase involved in the biosynthesis of the phytoalexins bisphenyls and dibenzofurans. Can also use salicoyl-CoA and malonyl-CoA to produce a diketide intermediate yielding 4-hydroxycoumarin after cyclization and enolization. Can also use m-hydroxybenzoyl-CoA as substrate, producing m-hydroxybenzoyl diacetic acid lactone as a derailment product. No activity with p-hydroxybenzoyl-CoA, CoA-linked cinnamic acids or acetyl-CoA. This chain is 3,5-dihydroxybiphenyl synthase (BIS1), found in Sorbus aucuparia (European mountain ash).